Consider the following 83-residue polypeptide: Alpha-elapitoxin-Ppr1 (83 aa).

The first 21 residues, 1-21, serve as a signal peptide directing secretion; the sequence is MKTLLLTLVVVTIVCLDLGYT. Disulfide bonds link cysteine 24/cysteine 45, cysteine 38/cysteine 62, cysteine 64/cysteine 75, and cysteine 76/cysteine 81.

This sequence belongs to the three-finger toxin family. Short-chain subfamily. Type I alpha-neurotoxin sub-subfamily. As to expression, expressed by the venom gland.

The protein resides in the secreted. Functionally, bird-specific neurotoxin (tested on chicken) that acts as a pseudo-irreversible antagonist at the nicotinic acetylcholine receptor (nAChR) of the skeletal neuromuscular junction. Has no significant effect on the electrically-induced twitches of the rat isolated phrenic nerve-diaphragm preparation. The sequence is that of Alpha-elapitoxin-Ppr1 from Pseudechis porphyriacus (Red-bellied black snake).